We begin with the raw amino-acid sequence, 416 residues long: Glutamyl-tRNA reductase (416 aa).

Substrate is bound by residues 51–54 (TCNR), Ser110, 115–117 (EPQ), and Gln121. Residue Cys52 is the Nucleophile of the active site. 190 to 195 (GAGQTG) serves as a coordination point for NADP(+).

This sequence belongs to the glutamyl-tRNA reductase family. In terms of assembly, homodimer.

It catalyses the reaction (S)-4-amino-5-oxopentanoate + tRNA(Glu) + NADP(+) = L-glutamyl-tRNA(Glu) + NADPH + H(+). It functions in the pathway porphyrin-containing compound metabolism; protoporphyrin-IX biosynthesis; 5-aminolevulinate from L-glutamyl-tRNA(Glu): step 1/2. In terms of biological role, catalyzes the NADPH-dependent reduction of glutamyl-tRNA(Glu) to glutamate 1-semialdehyde (GSA). The protein is Glutamyl-tRNA reductase of Francisella tularensis subsp. tularensis (strain FSC 198).